The primary structure comprises 673 residues: Annexin A6 (673 aa).

Alanine 2 carries the post-translational modification N-acetylalanine. Serine 13 carries the post-translational modification Phosphoserine. 8 Annexin repeats span residues 20–91 (FDAN…NLMR), 92–163 (PLAY…VLLQ), 175–247 (DLVQ…AVVK), 251–322 (STPE…KLCG), 363–434 (FNPD…GLMM), 435–506 (PPAH…SLAT), 521–595 (EDAQ…AIVQ), and 599–670 (NKPL…ALCG). Tyrosine 30 is subject to Phosphotyrosine. 4 positions are modified to N6-acetyllysine: lysine 63, lysine 68, lysine 75, and lysine 81. Phosphotyrosine is present on tyrosine 201. An N6-acetyllysine mark is found at lysine 306, lysine 370, and lysine 418. Residue serine 422 is modified to Phosphoserine. Position 483 is an N6-acetyllysine (lysine 483). Phosphoserine is present on serine 537. Residue lysine 620 is modified to N6-acetyllysine.

It belongs to the annexin family.

The protein localises to the cytoplasm. It localises to the melanosome. Functionally, may associate with CD21. May regulate the release of Ca(2+) from intracellular stores. The chain is Annexin A6 (Anxa6) from Mus musculus (Mouse).